The sequence spans 300 residues: MKTGNQFKTVALVGRSNTPGIAEPLATLADSIATLGFEVVFEGDTAREIGIAGYPALTPAEIGARADVAIVLGGDGTMLGIGRQLAPYRTPLIGINHGRLGFITDIAASDMQALVPVMLAGKFEREERSLLEARIVRDGEPIYHALAFNDVVVNRSGFSGMVELRASVDGRYMYNQRSDGLIVATPTGSTAYALSSAGPILHPQLAGVVLVPIAPHALSNRPIVLPDDSKIAIQIVGGRDVNVNFDMQSFTSLELNDTIEVRRSKHTVPFLHPIGYSYYTTLRKKLHWNEHASNEDDKAS.

The Proton acceptor role is filled by aspartate 75. Residues 75-76 (DG), 149-150 (ND), arginine 177, aspartate 179, 190-195 (TAYALS), alanine 214, and glutamine 248 contribute to the NAD(+) site.

It belongs to the NAD kinase family. Requires a divalent metal cation as cofactor.

Its subcellular location is the cytoplasm. The catalysed reaction is NAD(+) + ATP = ADP + NADP(+) + H(+). Functionally, involved in the regulation of the intracellular balance of NAD and NADP, and is a key enzyme in the biosynthesis of NADP. Catalyzes specifically the phosphorylation on 2'-hydroxyl of the adenosine moiety of NAD to yield NADP. The protein is NAD kinase of Burkholderia cenocepacia (strain HI2424).